The following is a 183-amino-acid chain: Probable apo-citrate lyase phosphoribosyl-dephospho-CoA transferase (183 aa).

Belongs to the CitX family.

The catalysed reaction is apo-[citrate lyase ACP] + 2'-(5''-triphospho-alpha-D-ribosyl)-3'-dephospho-CoA = holo-[citrate lyase ACP] + diphosphate. In terms of biological role, transfers 2-(5''-triphosphoribosyl)-3'-dephosphocoenzyme-A on a serine residue to the apo-acyl carrier protein (gamma chain) of the citrate lyase to yield holo-acyl carrier protein. This chain is Probable apo-citrate lyase phosphoribosyl-dephospho-CoA transferase, found in Escherichia coli (strain 55989 / EAEC).